The following is a 462-amino-acid chain: Transcription initiation factor TFIID subunit 7-like (462 aa).

Disordered regions lie at residues 1 to 97 (MECP…VPDE) and 327 to 366 (DSRS…SEEY). 2 stretches are compositionally biased toward low complexity: residues 16 to 30 (STPT…SQQE) and 66 to 77 (DADSSAQAAAQA). Residues 333–365 (DDDEDEDDEDEDEDEDEDEDEDKEEEEEDCSEE) are compositionally biased toward acidic residues. A coiled-coil region spans residues 342 to 462 (DEDEDEDEDE…QEQLQRFLKK (121 aa)).

The protein belongs to the TAF7 family. As to quaternary structure, TFIID is composed of TATA binding protein (TBP) and a number of TBP-associated factors (TAFs). TAF7L may replace TAF7 in a spermatogenesis-specific form of TFIID. Interacts with TBP; the interaction occurs in a sub-population of cells (pachytene and haploid round spermatids) and is developmentally regulated through differential intracellular localization of the two proteins. Interacts with TAF1. Testis-specific.

It is found in the nucleus. The protein resides in the cytoplasm. Functionally, probably functions as a spermatogenesis-specific component of the DNA-binding general transcription factor complex TFIID, a multimeric protein complex that plays a central role in mediating promoter responses to various activators and repressors. May play a role in spermatogenesis. The polypeptide is Transcription initiation factor TFIID subunit 7-like (TAF7L) (Homo sapiens (Human)).